The primary structure comprises 246 residues: uncharacterized protein (246 aa).

This is an uncharacterized protein from Dictyostelium discoideum (Social amoeba).